Reading from the N-terminus, the 674-residue chain is Protein asunder (674 aa).

The stretch at 516-538 (HKAKDQYRLLYRELEQLIQLNAS) forms a coiled coil. The short motif at 601–607 (LKASKRR) is the Nuclear localization signal (NLS) element.

It belongs to the Integrator subunit 13 family. As to quaternary structure, belongs to the multiprotein complex Integrator, at least composed of IntS1, IntS2, IntS3, IntS4, omd/IntS5, IntS6, defl/IntS7, IntS8, IntS9, IntS10, IntS11, IntS12, asun/IntS13, IntS14 and IntS15. The core complex associates with protein phosphatase 2A subunits mts/PP2A and Pp2A-29B, to form the Integrator-PP2A (INTAC) complex. In terms of processing, phosphorylated.

It is found in the nucleus. The protein resides in the cytoplasm. Its subcellular location is the perinuclear region. Its function is as follows. Component of the integrator complex, a multiprotein complex that terminates RNA polymerase II (Pol II) transcription in the promoter-proximal region of genes. The integrator complex provides a quality checkpoint during transcription elongation by driving premature transcription termination of transcripts that are unfavorably configured for transcriptional elongation: the complex terminates transcription by (1) catalyzing dephosphorylation of the C-terminal domain (CTD) of Pol II subunit Polr2A/Rbp1 and Spt5, and (2) degrading the exiting nascent RNA transcript via endonuclease activity. The integrator complex is also involved in the 3'-end processing of the U7 snRNA, and also the spliceosomal snRNAs U1, U2, U4 and U5. This chain is Protein asunder (asun), found in Drosophila persimilis (Fruit fly).